Reading from the N-terminus, the 427-residue chain is Trigger factor (427 aa).

The 86-residue stretch at 163 to 248 (GDVVNLDFDG…INEVKSKEVP (86 aa)) folds into the PPIase FKBP-type domain.

The protein belongs to the FKBP-type PPIase family. Tig subfamily.

It localises to the cytoplasm. The catalysed reaction is [protein]-peptidylproline (omega=180) = [protein]-peptidylproline (omega=0). In terms of biological role, involved in protein export. Acts as a chaperone by maintaining the newly synthesized protein in an open conformation. Functions as a peptidyl-prolyl cis-trans isomerase. The protein is Trigger factor of Macrococcus caseolyticus (strain JCSC5402) (Macrococcoides caseolyticum).